The chain runs to 445 residues: Sporulation-specific glucan 1,3-beta-glucosidase (445 aa).

The N-terminal stretch at 1 to 21 (MVSFRGLTTLTLLFTKLVNCN) is a signal peptide. N-linked (GlcNAc...) asparagine glycosylation is present at N201. The Proton donor role is filled by E233. The active-site Nucleophile is the E335.

This sequence belongs to the glycosyl hydrolase 5 (cellulase A) family.

The protein localises to the secreted. It catalyses the reaction Successive hydrolysis of beta-D-glucose units from the non-reducing ends of (1-&gt;3)-beta-D-glucans, releasing alpha-glucose.. Probably involved in the processes of spore formation and contributes to ascospore thermoresistance by participating in the morphogenesis of ascospore walls. The enzyme may do this by modifying glucan linkages in the developing ascospore wall, thus strengthening it or lending it plasticity. In Saccharomyces cerevisiae (strain ATCC 204508 / S288c) (Baker's yeast), this protein is Sporulation-specific glucan 1,3-beta-glucosidase (SPR1).